We begin with the raw amino-acid sequence, 357 residues long: S-adenosylmethionine:tRNA ribosyltransferase-isomerase (357 aa).

Belongs to the QueA family. Monomer.

It localises to the cytoplasm. It catalyses the reaction 7-aminomethyl-7-carbaguanosine(34) in tRNA + S-adenosyl-L-methionine = epoxyqueuosine(34) in tRNA + adenine + L-methionine + 2 H(+). It functions in the pathway tRNA modification; tRNA-queuosine biosynthesis. Functionally, transfers and isomerizes the ribose moiety from AdoMet to the 7-aminomethyl group of 7-deazaguanine (preQ1-tRNA) to give epoxyqueuosine (oQ-tRNA). The chain is S-adenosylmethionine:tRNA ribosyltransferase-isomerase from Hamiltonella defensa subsp. Acyrthosiphon pisum (strain 5AT).